Consider the following 141-residue polypeptide: uncharacterized protein (141 aa).

Positions 1 to 15 are cleaved as a signal peptide; it reads MKKVAIVGALLVLAG. Cysteine 16 is lipidated: N-palmitoyl cysteine. Residue cysteine 16 is the site of S-diacylglycerol cysteine attachment.

It localises to the cell membrane. This is an uncharacterized protein from Salmonella typhimurium (strain LT2 / SGSC1412 / ATCC 700720).